The sequence spans 104 residues: Sweet protein mabinlin-3 (104 aa).

4 disulfides stabilise this stretch: C4–C53, C17–C42, C43–C91, and C55–C99.

Belongs to the 2S seed storage albumins family. In terms of assembly, heterodimer of a small A and a large B chain linked by disulfide bonds.

Heat stable 2S seed storage protein having sweetness-inducing activity. The chain is Sweet protein mabinlin-3 from Capparis masaikai (Mabinlang).